Here is a 913-residue protein sequence, read N- to C-terminus: WD repeat-containing protein 44 (913 aa).

Positions 1 to 14 are enriched in acidic residues; it reads MASESDTEEFYDAP. The interval 1–24 is disordered; sequence MASESDTEEFYDAPEDVHLGGGYP. Residue A2 is modified to N-acetylalanine. The binding activity stretch occupies residues 2–170; the sequence is ASESDTEEFY…SSTEQLNVLE (169 aa). S3 carries the post-translational modification Phosphoserine. Residues 9–15 carry the FFAT-like motif motif; sequence EFYDAPE. Y11 carries the phosphotyrosine modification. 7 positions are modified to phosphoserine: S27, S50, S66, S71, S81, S96, and S126. Positions 119-184 form a coiled coil; the sequence is EESQKAESQN…VLNKEAVEVK (66 aa). A phosphothreonine mark is found at T158 and T219. The interval 205 to 348 is disordered; the sequence is AVEEVAPAKP…RPRSNSGREL (144 aa). Residues 211–257 are important for interaction with ARHGAP26 AND ARHGAP10; the sequence is PAKPPRHLTPEPDIVASTKKPVPARPPPPTNFPPPRPPPPSRPAPPP. The segment covering 233–256 has biased composition (pro residues); sequence PARPPPPTNFPPPRPPPPSRPAPP. S262 carries the phosphoserine modification. Over residues 262-278 the composition is skewed to basic and acidic residues; that stretch reads SELEFETLKTPDIDVPK. T271 carries the post-translational modification Phosphothreonine. Polar residues predominate over residues 280-311; the sequence is NITSDSLLTASMASESTVKDSQPSLDLASATS. The interval 334 to 347 is important for interaction with RAB11A; that stretch reads VMGPQRPRSNSGRE. Phosphoserine; by PKB/AKT1 occurs at positions 342 and 344. T349 is modified (phosphothreonine). Disordered regions lie at residues 397–424 and 459–480; these read SNDA…LKQK and DEVF…MPYT. S403, S470, S471, and S472 each carry phosphoserine. Acidic residues predominate over residues 467-476; the sequence is DDPSSSDDEG. Y479 bears the Phosphotyrosine mark. The stretch at 509 to 548 is one WD 1 repeat; the sequence is EHMGAVWTMKFSHCGRLLASAGQDNVVRIWALKNAFDYFN. The segment at 557–593 is disordered; it reads EGRVSPSPSQESLSSSKSDTDTGVCSGTDEDPDDKNA. S561 and S565 each carry phosphoserine. Over residues 561 to 573 the composition is skewed to low complexity; sequence SPSPSQESLSSSK. 6 WD repeats span residues 605 to 643, 645 to 685, 690 to 729, 740 to 779, 784 to 823, and 876 to 913; these read GHTA…CLCC, QHID…VALW, GQTK…YHTQ, KVGR…LSMK, VNSS…SKFT, and VLDA…KNVS.

Interacts with the GTP-bound form of RAB11A and RAB11B. Interacts with GRAF1/ARHGAP26 or GRAF2/ARHGAP10; the interaction connects the endoplasmic reticulum (ER) with the endosomal tubule. Interacts (via FFAT-like motif) with VAPA (via MSP domain) or VAPB (via MSP domain); the interaction connects the ER with the endosomal tubule. Does not bind to RAB7, RAB10, RAB14, RAB35 and RAB8A. Phosphorylated by ATK1; the phosphorylation stabilizes its interaction with RAB11A and RAB11B.

It is found in the cytoplasm. It localises to the cytosol. The protein resides in the perinuclear region. The protein localises to the endosome membrane. Its subcellular location is the golgi apparatus. It is found in the trans-Golgi network. In terms of biological role, downstream effector for Rab11 which regulates Rab11 intracellular membrane trafficking functions such as endocytic recycling, intracellular ciliogenesis and protein export. ATK1-mediated phosphorylation of WDR44 induces binding to Rab11 which activates endocytic recycling of transferrin receptor back to the plasma membrane. When bound to Rab11, prevents the formation of the ciliogenic Rab11-Rabin8/RAB3IP-RAB11FIP3 complex, therefore inhibiting preciliary trafficking and ciliogenesis. Participates in neo-synthesized protein export by connecting the endoplasmic reticulum (ER) with the endosomal tubule via direct interactions with the integral ER proteins VAPA or VAPB and the endosomal protein GRAFs (GRAF1/ARHGAP26 or GRAF2/ARHGAP10), which facilitates the transfer of proteins such as E-cadherin, MPP14 and CFTR into a Rab8-Rab10-Rab11-dependent export route. The chain is WD repeat-containing protein 44 from Homo sapiens (Human).